The following is a 172-amino-acid chain: Large ribosomal subunit protein uL10 (172 aa).

It belongs to the universal ribosomal protein uL10 family. Part of the ribosomal stalk of the 50S ribosomal subunit. The N-terminus interacts with L11 and the large rRNA to form the base of the stalk. The C-terminus forms an elongated spine to which L12 dimers bind in a sequential fashion forming a multimeric L10(L12)X complex.

In terms of biological role, forms part of the ribosomal stalk, playing a central role in the interaction of the ribosome with GTP-bound translation factors. The sequence is that of Large ribosomal subunit protein uL10 from Pelodictyon phaeoclathratiforme (strain DSM 5477 / BU-1).